Consider the following 289-residue polypeptide: Probable WRKY transcription factor 38 (289 aa).

Residues Pro62–Asp103 form a disordered region. A DNA-binding region (WRKY) is located at residues Ser104–Glu172. Residues Leu249–Ser266 are compositionally biased toward low complexity. A disordered region spans residues Leu249–Pro278.

This sequence belongs to the WRKY group III family.

It localises to the nucleus. In terms of biological role, transcription factor. Interacts specifically with the W box (5'-(T)TGAC[CT]-3'), a frequently occurring elicitor-responsive cis-acting element. The sequence is that of Probable WRKY transcription factor 38 (WRKY38) from Arabidopsis thaliana (Mouse-ear cress).